A 37-amino-acid chain; its full sequence is Large ribosomal subunit protein bL36c (37 aa).

It belongs to the bacterial ribosomal protein bL36 family.

The protein localises to the plastid. It localises to the chloroplast. The protein is Large ribosomal subunit protein bL36c of Tupiella akineta (Green alga).